The sequence spans 95 residues: Large ribosomal subunit protein bL25 (95 aa).

Belongs to the bacterial ribosomal protein bL25 family. In terms of assembly, part of the 50S ribosomal subunit; part of the 5S rRNA/L5/L18/L25 subcomplex. Contacts the 5S rRNA. Binds to the 5S rRNA independently of L5 and L18.

This is one of the proteins that binds to the 5S RNA in the ribosome where it forms part of the central protuberance. The chain is Large ribosomal subunit protein bL25 from Shewanella woodyi (strain ATCC 51908 / MS32).